A 335-amino-acid polypeptide reads, in one-letter code: Sphingomyelinase C (335 aa).

An N-terminal signal peptide occupies residues 1–28; sequence MEKFKIIKTIPKICGAFIFLLFFTFLFG.

This sequence belongs to the neutral sphingomyelinase family.

The protein resides in the secreted. It carries out the reaction a sphingomyelin + H2O = phosphocholine + an N-acylsphing-4-enine + H(+). Virulence factor that promotes intracellular proliferation by mediating the disruption of the phagocytic vacuole and the release of bacteria into the host cell cytosol. May act in concert with the phospholipases PlcA and PlcB and the hemolysin hly to mediate efficient escape from the vacuole. This Listeria ivanovii protein is Sphingomyelinase C (smcL).